A 519-amino-acid polypeptide reads, in one-letter code: Matrix metalloproteinase-B (519 aa).

A signal peptide spans 1-26 (MTKWSPNGNPLSTIYLILSLFTLAHT). The propeptide at 27–126 (APTTQHSRTT…RQEQTKRTKR (100 aa)) is activation peptide. Over residues 29–39 (TTQHSRTTTQL) the composition is skewed to polar residues. Positions 29–50 (TTQHSRTTTQLRLEDEDGGGGV) are disordered. The Cysteine switch motif lies at 109–116 (PRCTQTDV). The Zn(2+) site is built by cysteine 111, histidine 208, aspartate 210, histidine 232, histidine 247, and histidine 276. Glutamate 277 is a catalytic residue. Zn(2+) is bound by residues histidine 280 and histidine 286. N-linked (GlcNAc...) asparagine glycosylation is present at asparagine 341. Positions 391 to 402 (KDKRSYRGDSKI) are enriched in basic and acidic residues. The segment at 391-410 (KDKRSYRGDSKIPKCSSNNS) is disordered. Residue asparagine 408 is glycosylated (N-linked (GlcNAc...) asparagine).

The protein belongs to the peptidase M10A family. It depends on Zn(2+) as a cofactor. Expressed in spermatheca and spermathecal-uterine valve, weakly in vulva and anal muscles and in two cells in the head (probably RMEV and RMED motor neurons).

The protein resides in the secreted. It is found in the extracellular space. Its subcellular location is the extracellular matrix. Inhibited by human TIMP1 and TIMP2 and the broad MMP inhibitors BB94 (Batimastat) and CT543. Functionally, metalloprotease involved in molting, a process during larval stages in which a new cuticle is formed and the old cuticle is shed. Plays a role in thermotolerance probably by preventing the accumulation of oxidized lipoproteins and cholesterol. The protein is Matrix metalloproteinase-B of Caenorhabditis elegans.